Here is a 273-residue protein sequence, read N- to C-terminus: Flagellin FljK (273 aa).

This sequence belongs to the bacterial flagellin family. In terms of assembly, in C.crescentus, the flagellar filament is composed of multiple flagellins of 29 kDa; 27 kDa and 25 kDa.

The protein localises to the secreted. Its subcellular location is the bacterial flagellum. Functionally, flagellin is the subunit protein which polymerizes to form the filaments of bacterial flagella. The chain is Flagellin FljK (fljK) from Caulobacter vibrioides (strain ATCC 19089 / CIP 103742 / CB 15) (Caulobacter crescentus).